The primary structure comprises 180 residues: Amnesiac neuropeptides (180 aa).

The N-terminal stretch at 1-32 is a signal peptide; it reads MRSFCCCFYPAAVALHCVLLFYTFFLLFRASA. 2 consecutive propeptides follow at residues 33-35 and 152-180; these read LRR and GRRSVPRGQPKFSRENPRALSPSLLGEMR. The tract at residues 155–180 is disordered; the sequence is SVPRGQPKFSRENPRALSPSLLGEMR.

Enriched expression in the embryonic and larval nervous systems. Strongly expressed in two large neurons that project over all the lobes of the mushroom bodies.

The protein localises to the secreted. Required for associative learning and memory in adults. Expression pattern suggests a modulatory role in memory formation. Controls neurotransmitter-mediated signaling pathways associated with the structure of the larval peripheral nerve. This chain is Amnesiac neuropeptides (amn), found in Drosophila melanogaster (Fruit fly).